We begin with the raw amino-acid sequence, 70 residues long: Large ribosomal subunit protein eL38 (70 aa).

It belongs to the eukaryotic ribosomal protein eL38 family.

The sequence is that of Large ribosomal subunit protein eL38 (RpL38) from Timarcha balearica.